A 363-amino-acid chain; its full sequence is DNA repair protein rlp1 (363 aa).

This sequence belongs to the RecA family. RAD51 subfamily. In terms of assembly, interacts with rdl1 and sws1.

The protein resides in the cytoplasm. The protein localises to the nucleus. Its function is as follows. Required for normal levels of meiotic recombination. Acts in the recombinational pathway of double-strand break (DSB) repair together with rhp51, rhp55 and rad22. Required for the full extent of DNA recombination and cell survival under condition of a replication fork collapse. The sequence is that of DNA repair protein rlp1 from Schizosaccharomyces pombe (strain 972 / ATCC 24843) (Fission yeast).